The sequence spans 224 residues: UPF0758 protein VCM66_0205 (224 aa).

A disordered region spans residues 1–20; the sequence is MSLKQLPTESMPREKLLQRG. The 123-residue stretch at 102-224 folds into the MPN domain; that stretch reads ALTSPQQTKL…VVSFAERGWI (123 aa). Residues histidine 173, histidine 175, and aspartate 186 each contribute to the Zn(2+) site. The short motif at 173–186 is the JAMM motif element; that stretch reads HNHPSGVAEPSQAD.

It belongs to the UPF0758 family.

This is UPF0758 protein VCM66_0205 from Vibrio cholerae serotype O1 (strain M66-2).